The primary structure comprises 57 residues: Large ribosomal subunit protein bL32 (57 aa).

A disordered region spans residues 1 to 21 (MAVPKRRTSKKVKNQRRTHKK).

The protein belongs to the bacterial ribosomal protein bL32 family.

This Oceanobacillus iheyensis (strain DSM 14371 / CIP 107618 / JCM 11309 / KCTC 3954 / HTE831) protein is Large ribosomal subunit protein bL32.